The chain runs to 198 residues: Charged multivesicular body protein 2a homolog 2 (198 aa).

Positions 11 to 42 (KEVLRENQRNLNKSMREIDRERVALQNQEKKI) form a coiled coil.

The protein belongs to the SNF7 family. In terms of assembly, probable core component of the endosomal sorting required for transport complex III (ESCRT-III). ESCRT-III components are thought to multimerize to form a flat lattice on the perimeter membrane of the endosome.

Its subcellular location is the endosome membrane. In terms of biological role, probable core component of the endosomal sorting required for transport complex III (ESCRT-III) which is involved in multivesicular bodies (MVBs) formation and sorting of endosomal cargo proteins into MVBs. MVBs contain intraluminal vesicles (ILVs) that are generated by invagination and scission from the limiting membrane of the endosome and are delivered to lysosomes enabling degradation of membrane proteins. This Dictyostelium discoideum (Social amoeba) protein is Charged multivesicular body protein 2a homolog 2 (chmp2a2).